The sequence spans 115 residues: Large ribosomal subunit protein uL18 (115 aa).

This sequence belongs to the universal ribosomal protein uL18 family. As to quaternary structure, part of the 50S ribosomal subunit; part of the 5S rRNA/L5/L18/L25 subcomplex. Contacts the 5S and 23S rRNAs.

This is one of the proteins that bind and probably mediate the attachment of the 5S RNA into the large ribosomal subunit, where it forms part of the central protuberance. The chain is Large ribosomal subunit protein uL18 from Vesicomyosocius okutanii subsp. Calyptogena okutanii (strain HA).